The sequence spans 762 residues: Hyperosmolality-gated Ca2+ permeable channel 2.2 (762 aa).

10 helical membrane passes run 3–23, 90–110, 144–164, 354–374, 402–422, 445–465, 500–520, 557–577, 594–614, and 615–635; these read VSAL…LVSL, MVIC…AFVL, LWVH…LLYF, IATL…VTFV, VITG…VPPL, KILY…GSVI, GWAG…NLIA, VIAP…YLIY, QYWP…QVIA, and LGFF…PLIL.

This sequence belongs to the CSC1 (TC 1.A.17) family.

The protein resides in the membrane. Acts as an osmosensitive calcium-permeable cation channel. In Arabidopsis thaliana (Mouse-ear cress), this protein is Hyperosmolality-gated Ca2+ permeable channel 2.2.